The primary structure comprises 179 residues: Transcription factor E (179 aa).

The HTH TFE/IIEalpha-type domain maps to 1 to 102 (MAKKKVKYTF…YWRFDSRKAA (102 aa)).

The protein belongs to the TFE family. As to quaternary structure, monomer. Interaction with RNA polymerase subunits RpoF and RpoE is necessary for Tfe stimulatory transcription activity. Able to interact with Tbp and RNA polymerase in the absence of DNA promoter. Interacts both with the preinitiation and elongation complexes.

Its function is as follows. Transcription factor that plays a role in the activation of archaeal genes transcribed by RNA polymerase. Facilitates transcription initiation by enhancing TATA-box recognition by TATA-box-binding protein (Tbp), and transcription factor B (Tfb) and RNA polymerase recruitment. Not absolutely required for transcription in vitro, but particularly important in cases where Tbp or Tfb function is not optimal. It dynamically alters the nucleic acid-binding properties of RNA polymerases by stabilizing the initiation complex and destabilizing elongation complexes. Seems to translocate with the RNA polymerase following initiation and acts by binding to the non template strand of the transcription bubble in elongation complexes. This Methanosphaera stadtmanae (strain ATCC 43021 / DSM 3091 / JCM 11832 / MCB-3) protein is Transcription factor E.